Here is a 644-residue protein sequence, read N- to C-terminus: SURP and G-patch domain-containing protein 1 (644 aa).

A compositionally biased stretch (basic and acidic residues) spans R44–A54. 2 disordered regions span residues R44–Q74 and A98–L122. T128 carries the post-translational modification Phosphothreonine. An SURP motif 1 repeat occupies V188–Y230. S253 carries the phosphoserine modification. The SURP motif 2 repeat unit spans residues L263 to Y306. 2 disordered regions span residues A316–L342 and P360–L412. Position 323 is a phosphoserine (S323). Residues P360 to P369 show a composition bias toward pro residues. The Nuclear localization signal motif lies at K379–R385. Phosphoserine occurs at positions 408, 410, 413, and 484. Residues V561–P608 form the G-patch domain.

As to quaternary structure, component of the spliceosome.

The protein resides in the nucleus. Plays a role in pre-mRNA splicing. The chain is SURP and G-patch domain-containing protein 1 (Sugp1) from Rattus norvegicus (Rat).